Consider the following 313-residue polypeptide: Ornithine carbamoyltransferase (313 aa).

Carbamoyl phosphate contacts are provided by residues 57–60 (STRT), arginine 108, and 135–138 (HPTQ). L-ornithine contacts are provided by residues asparagine 167, aspartate 231, and 235–236 (SM). Residues 272 to 273 (CL) and arginine 300 contribute to the carbamoyl phosphate site.

This sequence belongs to the aspartate/ornithine carbamoyltransferase superfamily. OTCase family.

It is found in the cytoplasm. It catalyses the reaction carbamoyl phosphate + L-ornithine = L-citrulline + phosphate + H(+). It participates in amino-acid biosynthesis; L-arginine biosynthesis; L-arginine from L-ornithine and carbamoyl phosphate: step 1/3. Functionally, reversibly catalyzes the transfer of the carbamoyl group from carbamoyl phosphate (CP) to the N(epsilon) atom of ornithine (ORN) to produce L-citrulline. This Thermotoga petrophila (strain ATCC BAA-488 / DSM 13995 / JCM 10881 / RKU-1) protein is Ornithine carbamoyltransferase.